A 168-amino-acid chain; its full sequence is HTH-type transcriptional regulator IscR (168 aa).

Positions 2 to 131 (KLTSKGRYAV…NNITLGELMT (130 aa)) constitute an HTH rrf2-type domain. Positions 28 to 51 (LADISERQGISLSYLEQLFSKLRK) form a DNA-binding region, H-T-H motif. 3 residues coordinate [2Fe-2S] cluster: Cys-92, Cys-98, and Cys-104.

[2Fe-2S] cluster serves as cofactor.

Its function is as follows. Regulates the transcription of several operons and genes involved in the biogenesis of Fe-S clusters and Fe-S-containing proteins. The chain is HTH-type transcriptional regulator IscR from Vibrio parahaemolyticus serotype O3:K6 (strain RIMD 2210633).